The chain runs to 229 residues: Ribonuclease 3 (229 aa).

The RNase III domain occupies 5–127 (LDRLERKLGY…LIGAIYLDTG (123 aa)). Residue Glu40 coordinates Mg(2+). The active site involves Asp44. Residues Asp113 and Glu116 each contribute to the Mg(2+) site. The active site involves Glu116. The 71-residue stretch at 154–224 (DPKTRLQEFL…AAAALVALGV (71 aa)) folds into the DRBM domain.

It belongs to the ribonuclease III family. Homodimer. It depends on Mg(2+) as a cofactor.

The protein localises to the cytoplasm. It catalyses the reaction Endonucleolytic cleavage to 5'-phosphomonoester.. Digests double-stranded RNA. Involved in the processing of primary rRNA transcript to yield the immediate precursors to the large and small rRNAs (23S and 16S). Processes some mRNAs, and tRNAs when they are encoded in the rRNA operon. Processes pre-crRNA and tracrRNA of type II CRISPR loci if present in the organism. This chain is Ribonuclease 3, found in Pseudomonas paraeruginosa (strain DSM 24068 / PA7) (Pseudomonas aeruginosa (strain PA7)).